The following is a 181-amino-acid chain: Translation initiation factor IF-3 (181 aa).

Belongs to the IF-3 family. Monomer.

The protein localises to the cytoplasm. IF-3 binds to the 30S ribosomal subunit and shifts the equilibrium between 70S ribosomes and their 50S and 30S subunits in favor of the free subunits, thus enhancing the availability of 30S subunits on which protein synthesis initiation begins. The chain is Translation initiation factor IF-3 from Pseudoalteromonas translucida (strain TAC 125).